The sequence spans 65 residues: MPGVKVKEAEPFELALKKFKKQCEKAGILSEVRKREHYEKPSIKKKKKAIAARKRALKKQRKMVD.

The protein belongs to the bacterial ribosomal protein bS21 family.

In Geobacter sp. (strain M21), this protein is Small ribosomal subunit protein bS21.